The primary structure comprises 299 residues: S-methyl-5'-thioadenosine phosphorylase (299 aa).

Phosphate-binding positions include Ser14, 56 to 57, and 89 to 90; these read RH and SA. Substrate is bound at residue Met191. Residue Thr192 coordinates phosphate. 215-217 is a binding site for substrate; it reads DYD.

It belongs to the PNP/MTAP phosphorylase family. MTAP subfamily. In terms of assembly, homohexamer. Dimer of a homotrimer.

The catalysed reaction is S-methyl-5'-thioadenosine + phosphate = 5-(methylsulfanyl)-alpha-D-ribose 1-phosphate + adenine. It functions in the pathway amino-acid biosynthesis; L-methionine biosynthesis via salvage pathway; S-methyl-5-thio-alpha-D-ribose 1-phosphate from S-methyl-5'-thioadenosine (phosphorylase route): step 1/1. Functionally, catalyzes the reversible phosphorylation of S-methyl-5'-thioadenosine (MTA) to adenine and 5-methylthioribose-1-phosphate. Involved in the breakdown of MTA, a major by-product of polyamine biosynthesis. Responsible for the first step in the methionine salvage pathway after MTA has been generated from S-adenosylmethionine. Has broad substrate specificity with 6-aminopurine nucleosides as preferred substrates. The polypeptide is S-methyl-5'-thioadenosine phosphorylase (Gloeobacter violaceus (strain ATCC 29082 / PCC 7421)).